A 228-amino-acid polypeptide reads, in one-letter code: Thymidylate kinase (228 aa).

The span at 1-10 (MSDSAVQRSS) shows a compositional bias: polar residues. The tract at residues 1-23 (MSDSAVQRSSGRGRFITFEGGEG) is disordered. 20-27 (GGEGTGKS) is a binding site for ATP.

This sequence belongs to the thymidylate kinase family.

It catalyses the reaction dTMP + ATP = dTDP + ADP. Functionally, phosphorylation of dTMP to form dTDP in both de novo and salvage pathways of dTTP synthesis. In Bradyrhizobium diazoefficiens (strain JCM 10833 / BCRC 13528 / IAM 13628 / NBRC 14792 / USDA 110), this protein is Thymidylate kinase.